A 356-amino-acid chain; its full sequence is Tyrosine recombinase XerS (356 aa).

Residues 16-121 enclose the Core-binding (CB) domain; it reads LMPWYVLEYY…ALSSLYKYLT (106 aa). In terms of domain architecture, Tyr recombinase spans 169 to 354; that stretch reads GFLTYIDQEH…VNDEQKNALD (186 aa). Residues Arg210, Lys234, His306, Arg309, and His332 contribute to the active site. Residue Tyr341 is the O-(3'-phospho-DNA)-tyrosine intermediate of the active site.

The protein belongs to the 'phage' integrase family. XerS subfamily.

It is found in the cytoplasm. FtsK is required for recombination. Its function is as follows. Site-specific tyrosine recombinase, which acts by catalyzing the cutting and rejoining of the recombining DNA molecules. Essential to convert dimers of the bacterial chromosome into monomers to permit their segregation at cell division. This is Tyrosine recombinase XerS from Streptococcus pneumoniae serotype 2 (strain D39 / NCTC 7466).